Reading from the N-terminus, the 476-residue chain is Cysteine--tRNA ligase (476 aa).

Cys30 serves as a coordination point for Zn(2+). Residues 32–42 (PTVYNYIHIGN) carry the 'HIGH' region motif. Positions 215, 240, and 244 each coordinate Zn(2+). Positions 274–278 (KMSKS) match the 'KMSKS' region motif. Lys277 contributes to the ATP binding site.

The protein belongs to the class-I aminoacyl-tRNA synthetase family. Monomer. It depends on Zn(2+) as a cofactor.

It localises to the cytoplasm. It carries out the reaction tRNA(Cys) + L-cysteine + ATP = L-cysteinyl-tRNA(Cys) + AMP + diphosphate. The protein is Cysteine--tRNA ligase of Lactobacillus helveticus (strain DPC 4571).